Reading from the N-terminus, the 629-residue chain is Acetylcholinesterase (629 aa).

Positions 1 to 38 are cleaved as a signal peptide; that stretch reads MGQLSILCLFVTVCASVCGYSWPSDETTTKPSQFKDFH. An intrachain disulfide couples Cys-103 to Cys-130. Asn-125 carries N-linked (GlcNAc...) asparagine glycosylation. The Acyl-ester intermediate role is filled by Ser-253. A disulfide bond links Cys-307 and Cys-322. A glycan (N-linked (GlcNAc...) asparagine) is linked at Asn-308. Catalysis depends on Glu-382, which acts as the Charge relay system. N-linked (GlcNAc...) asparagine glycosylation occurs at Asn-418. Cys-458 and Cys-574 form a disulfide bridge. Catalysis depends on His-496, which acts as the Charge relay system. Residue Asn-509 is glycosylated (N-linked (GlcNAc...) asparagine). A lipid anchor (GPI-anchor amidated serine) is attached at Ser-605. A propeptide spans 606-629 (removed in mature form); that stretch reads SSNELLPPSTSLVLIWIMTLLNAL.

This sequence belongs to the type-B carboxylesterase/lipase family. Homodimer; disulfide-linked. Post-translationally, the N-terminus is blocked.

The protein resides in the synapse. The protein localises to the cell membrane. It catalyses the reaction acetylcholine + H2O = choline + acetate + H(+). Functionally, rapidly hydrolyzes choline released into the synapse. The chain is Acetylcholinesterase from Leptinotarsa decemlineata (Colorado potato beetle).